A 1157-amino-acid polypeptide reads, in one-letter code: Endo-1,4-beta-xylanase A (1157 aa).

The first 33 residues, 1-33 (MMKNNVDRIVSIVTALIMIFGASLFSPPIRVFA), serve as a signal peptide directing secretion. 2 CBM-cenC domains span residues 38–189 (INLV…VTTQ) and 195–343 (GNVI…VIGE). Positions 352–675 (QNDIPDLYSV…KPAFWAVVDP (324 aa)) constitute a GH10 domain. Glutamate 495 serves as the catalytic Proton donor. The active site involves aspartate 537. Glutamate 600 functions as the Nucleophile in the catalytic mechanism. SLH domains follow at residues 1051 to 1114 (KKGV…YSGE) and 1115 to 1157 (FSDV…EMTQ).

The protein belongs to the glycosyl hydrolase 10 (cellulase F) family.

It catalyses the reaction Endohydrolysis of (1-&gt;4)-beta-D-xylosidic linkages in xylans.. Its pathway is glycan degradation; xylan degradation. Functionally, endo-acting enzyme that randomly cleaves the internal xylosidic linkages of the xylan backbone, yielding xylooligosaccharides of various lengths which are further hydrolyzed to xylose molecules by beta-xylosidase (EC 3.2.1.37). Requires at least three xylose residues for catalytic activity. Does not have activity against xylobiose. This is Endo-1,4-beta-xylanase A (xynA) from Thermoanaerobacterium saccharolyticum.